The chain runs to 418 residues: Gamma-glutamyl phosphate reductase (418 aa).

Belongs to the gamma-glutamyl phosphate reductase family.

The protein resides in the cytoplasm. It catalyses the reaction L-glutamate 5-semialdehyde + phosphate + NADP(+) = L-glutamyl 5-phosphate + NADPH + H(+). The protein operates within amino-acid biosynthesis; L-proline biosynthesis; L-glutamate 5-semialdehyde from L-glutamate: step 2/2. Catalyzes the NADPH-dependent reduction of L-glutamate 5-phosphate into L-glutamate 5-semialdehyde and phosphate. The product spontaneously undergoes cyclization to form 1-pyrroline-5-carboxylate. The polypeptide is Gamma-glutamyl phosphate reductase (Clostridium acetobutylicum (strain ATCC 824 / DSM 792 / JCM 1419 / IAM 19013 / LMG 5710 / NBRC 13948 / NRRL B-527 / VKM B-1787 / 2291 / W)).